Consider the following 91-residue polypeptide: MANTAQARKRVLQNEKRRLHNASLRSRLRTYVKGVLKAVHVGDQEQARSALRAAESVIDKTVGKGVAHRNMAARTKSRLSARVKAMGNAAQ.

This sequence belongs to the bacterial ribosomal protein bS20 family.

Binds directly to 16S ribosomal RNA. The chain is Small ribosomal subunit protein bS20 from Acidithiobacillus ferrooxidans (strain ATCC 23270 / DSM 14882 / CIP 104768 / NCIMB 8455) (Ferrobacillus ferrooxidans (strain ATCC 23270)).